A 340-amino-acid polypeptide reads, in one-letter code: MRVYYDRDCDVNLIKDKKVAILGYGSQGHAHALNLRDSGAKNLVVALREGSASAKKAEAEGLQVMGIAEAAAWCDLIMFTMPDELQAETYKKYVHDNIREGAAIAFAHGLNVHFGLIEPKAGVDVIMMAPKGPGHTVRGEYTKGGGVPCLVAVDTDATGRALEIGLSYCSAIGGGRSGIIETNFREECETDLFGEQAVLCGGLVELIRMGFETLVEAGYAPEMAYFECLHEVKLIVDLIYEGGIANMNYSISNTAEYGEYVSGPRVLPYDETKARMKAILTDIQTGKFVRDFMQENTVGQPFFKGTRRLNDEHQIEAVGKELRGMMPWISAGKLVDQEKN.

The KARI N-terminal Rossmann domain maps to 1–182 (MRVYYDRDCD…GGGRSGIIET (182 aa)). Residues 24–27 (YGSQ), R48, S51, S53, and 83–86 (DELQ) each bind NADP(+). H108 is an active-site residue. G134 contacts NADP(+). Positions 183–329 (NFREECETDL…KELRGMMPWI (147 aa)) constitute a KARI C-terminal knotted domain. The Mg(2+) site is built by D191, E195, E227, and E231. S252 contributes to the substrate binding site.

It belongs to the ketol-acid reductoisomerase family. Requires Mg(2+) as cofactor.

The catalysed reaction is (2R)-2,3-dihydroxy-3-methylbutanoate + NADP(+) = (2S)-2-acetolactate + NADPH + H(+). It carries out the reaction (2R,3R)-2,3-dihydroxy-3-methylpentanoate + NADP(+) = (S)-2-ethyl-2-hydroxy-3-oxobutanoate + NADPH + H(+). It functions in the pathway amino-acid biosynthesis; L-isoleucine biosynthesis; L-isoleucine from 2-oxobutanoate: step 2/4. Its pathway is amino-acid biosynthesis; L-valine biosynthesis; L-valine from pyruvate: step 2/4. Involved in the biosynthesis of branched-chain amino acids (BCAA). Catalyzes an alkyl-migration followed by a ketol-acid reduction of (S)-2-acetolactate (S2AL) to yield (R)-2,3-dihydroxy-isovalerate. In the isomerase reaction, S2AL is rearranged via a Mg-dependent methyl migration to produce 3-hydroxy-3-methyl-2-ketobutyrate (HMKB). In the reductase reaction, this 2-ketoacid undergoes a metal-dependent reduction by NADPH to yield (R)-2,3-dihydroxy-isovalerate. The chain is Ketol-acid reductoisomerase (NADP(+)) from Dinoroseobacter shibae (strain DSM 16493 / NCIMB 14021 / DFL 12).